We begin with the raw amino-acid sequence, 229 residues long: Cytidylate kinase (229 aa).

12–20 contributes to the ATP binding site; the sequence is GPSGVGKST.

The protein belongs to the cytidylate kinase family. Type 1 subfamily.

It localises to the cytoplasm. The enzyme catalyses CMP + ATP = CDP + ADP. It carries out the reaction dCMP + ATP = dCDP + ADP. This chain is Cytidylate kinase, found in Mesomycoplasma hyopneumoniae (strain 7448) (Mycoplasma hyopneumoniae).